Consider the following 203-residue polypeptide: Putative 3-methyladenine DNA glycosylase (203 aa).

The protein belongs to the DNA glycosylase MPG family.

The polypeptide is Putative 3-methyladenine DNA glycosylase (Mycobacterium tuberculosis (strain ATCC 25177 / H37Ra)).